The primary structure comprises 341 residues: 4-(gamma-L-glutamylamino)butanoyl-[BtrI acyl-carrier protein] monooxygenase BtrO (341 aa).

The protein belongs to the bacterial luciferase oxidoreductase family.

The catalysed reaction is 4-(gamma-L-glutamylamino)butanoyl-[BtrI ACP] + FMNH2 + O2 = 4-(gamma-L-glutamylamino)-(2S)-2-hydroxybutanoyl-[BtrI ACP] + FMN + H2O + H(+). The protein operates within antibiotic biosynthesis; butirosin biosynthesis. Its function is as follows. Monooxygenase component of a two-component system involved in the biosynthesis of the side chain of the aminoglycoside antibiotics in the biosynthetic pathway of butirosin. Together with BtrV, mediates hydroxylation of gamma-L-Glu-GABA-S-BtrI. Not able to hydroxylate free substrates, activation by the acyl-carrier protein is mandatory. Octanoyl-S-[BtrI acyl-carrier protein] is also accepted as substrate. The protein is 4-(gamma-L-glutamylamino)butanoyl-[BtrI acyl-carrier protein] monooxygenase BtrO (btrO) of Niallia circulans (Bacillus circulans).